The primary structure comprises 472 residues: Gamma-glutamylputrescine synthetase PuuA (472 aa).

A GS beta-grasp domain is found at 35 to 129 (PNTQYVDVLL…MLLTMVDEDG (95 aa)). Residues 136 to 472 (PRNVLNRLWQ…TEIEWMLKNA (337 aa)) form the GS catalytic domain.

It belongs to the glutamine synthetase family. As to quaternary structure, dodecamer. The cofactor is Mg(2+). It depends on Mn(2+) as a cofactor.

It carries out the reaction putrescine + L-glutamate + ATP = gamma-L-glutamylputrescine + ADP + phosphate + H(+). Its pathway is amine and polyamine degradation; putrescine degradation; 4-aminobutanoate from putrescine: step 1/4. Involved in the breakdown of putrescine. Catalyzes the ATP-dependent gamma-glutamylation of putrescine, producing gamma-L-glutamylputrescine. Absolutely essential to utilize putrescine as both nitrogen and carbon sources and to decrease the toxicity of putrescine, which can lead to inhibition of cell growth and protein synthesis. In vitro is also able to use several diamines, and spermidine and spermine, instead of putrescine, but with a much lower activity, and cannot catalyze the gamma-glutamylation of ornithine or GABA. In Escherichia coli (strain K12), this protein is Gamma-glutamylputrescine synthetase PuuA.